The chain runs to 297 residues: Glucuronoxylan 4-O-methyltransferase 3 (297 aa).

Residues 9–29 traverse the membrane as a helical segment; that stretch reads LNLKVIFIGSSILILIIIYLA. Residues 35-47 show a composition bias toward low complexity; that stretch reads SSSSKPISKTNLS. Positions 35–63 are disordered; sequence SSSSKPISKTNLSQEEEETQHKQEGCPTT.

It belongs to the methyltransferase superfamily. Expressed in hypocotyls, roots, rosette leaves, stems and siliques.

The protein resides in the golgi apparatus membrane. It catalyses the reaction glucuronoxylan D-glucuronate + n S-adenosyl-L-methionine = glucuronoxylan 4-O-methyl-D-glucuronate + n S-adenosyl-L-homocysteine + n H(+). In terms of biological role, methyltransferase catalyzing 4-O-methylation of glucuronic acid side chains on xylan. This is Glucuronoxylan 4-O-methyltransferase 3 (GXM3) from Arabidopsis thaliana (Mouse-ear cress).